The primary structure comprises 931 residues: Bifunctional uridylyltransferase/uridylyl-removing enzyme (931 aa).

Residues 1-383 form a uridylyltransferase region; the sequence is MDSVTPNSRP…KTGNSWRRVP (383 aa). The uridylyl-removing stretch occupies residues 384–739; that stretch reads ESDDFIVDNN…VGFDPARGVT (356 aa). In terms of domain architecture, HD spans 499–622; it reads VDEHLIRCIG…VQSVEQMKLL (124 aa). 2 ACT domains span residues 740 to 822 and 851 to 931; these read ELTI…AVAR and VIEV…QPAA.

This sequence belongs to the GlnD family. Mg(2+) serves as cofactor.

It catalyses the reaction [protein-PII]-L-tyrosine + UTP = [protein-PII]-uridylyl-L-tyrosine + diphosphate. The catalysed reaction is [protein-PII]-uridylyl-L-tyrosine + H2O = [protein-PII]-L-tyrosine + UMP + H(+). Uridylyltransferase (UTase) activity is inhibited by glutamine, while glutamine activates uridylyl-removing (UR) activity. Its function is as follows. Modifies, by uridylylation and deuridylylation, the PII regulatory proteins (GlnB and homologs), in response to the nitrogen status of the cell that GlnD senses through the glutamine level. Under low glutamine levels, catalyzes the conversion of the PII proteins and UTP to PII-UMP and PPi, while under higher glutamine levels, GlnD hydrolyzes PII-UMP to PII and UMP (deuridylylation). Thus, controls uridylylation state and activity of the PII proteins, and plays an important role in the regulation of nitrogen fixation and metabolism. The chain is Bifunctional uridylyltransferase/uridylyl-removing enzyme from Bradyrhizobium sp. (strain BTAi1 / ATCC BAA-1182).